The chain runs to 574 residues: Sodium/hydrogen exchanger 8 (574 aa).

The next 11 helical transmembrane spans lie at 53–73, 77–97, 116–136, 149–169, 184–204, 254–274, 304–324, 347–367, 373–393, 410–430, and 444–464; these read MTIF…HLLI, LHFL…GAFI, PNMF…YSLH, LFSV…IYFL, FAFG…IFNA, LGYF…TGLI, GLAE…GIVM, VAFM…FSFP, SFVI…IFPL, MFIM…SLHL, and TTII…MPLI.

It belongs to the monovalent cation:proton antiporter 1 (CPA1) transporter (TC 2.A.36) family.

It is found in the golgi apparatus membrane. Its function is as follows. Involved in pH regulation to eliminate acids generated by active metabolism or to counter adverse environmental conditions. Major proton extruding system driven by the inward sodium ion chemical gradient. Plays an important role in signal transduction. In Gallus gallus (Chicken), this protein is Sodium/hydrogen exchanger 8.